The primary structure comprises 139 residues: Peptide methionine sulfoxide reductase MsrB (139 aa).

The MsrB domain occupies 17-139 (EEQWRRELSP…NSAALKLEPK (123 aa)). C56, C59, C105, and C108 together coordinate Zn(2+). C128 functions as the Nucleophile in the catalytic mechanism.

It belongs to the MsrB Met sulfoxide reductase family. It depends on Zn(2+) as a cofactor.

The catalysed reaction is L-methionyl-[protein] + [thioredoxin]-disulfide + H2O = L-methionyl-(R)-S-oxide-[protein] + [thioredoxin]-dithiol. In Bradyrhizobium diazoefficiens (strain JCM 10833 / BCRC 13528 / IAM 13628 / NBRC 14792 / USDA 110), this protein is Peptide methionine sulfoxide reductase MsrB.